The primary structure comprises 564 residues: MTSTTEPMTDLHIAQQAVLHPIFDIADAAGIPEEALEQYGRYKAKVDVRKVPDSGRAGRVVLVTAVSPTPAGEGKSTTTVGLADSLNRAFEQEGTGRRSMIALREPSLGPTLGMKGGATGGGYSQVLPMDEINLHFTGDLHAINSANNALCALIDNHIYQGNVLNIDPRRITFKRVLDMNDRALREVVIGLGGPTQGVPRQDGFDITVASEIMAVFCLATDLNDLKSRIGKITFGYNYDRQPLTVAGLGVEGVLTLLLKEAIKPNLVQTLAGTAALVHGGPFANIAHGCNSVIATSLARRRADVVVTEAGFGADLGAEKYMDIKSRFADVAPSAVVIVATIRALKMHGGVPKTELSVSDVAALRRGVTNLARHISNVRQFGLDPVVSINRFTSDSEEELDWLVSWCESQGVSIAIADVWGRGGGGDDLAAKVLAALDAPSDFRHLYELELPVKEKIELIAQKIYGAERVEFSSSALKRIAEISANGWDSLPVCMAKTQYSFSDDASLLGAPSGFVLHVRDLVPKTGAGFIVALTGAVMTMPGLPKQPAALKMDVDAEGNSVGLS.

Residue 69–76 (TPAGEGKS) participates in ATP binding.

Belongs to the formate--tetrahydrofolate ligase family.

It carries out the reaction (6S)-5,6,7,8-tetrahydrofolate + formate + ATP = (6R)-10-formyltetrahydrofolate + ADP + phosphate. Its pathway is one-carbon metabolism; tetrahydrofolate interconversion. This Renibacterium salmoninarum (strain ATCC 33209 / DSM 20767 / JCM 11484 / NBRC 15589 / NCIMB 2235) protein is Formate--tetrahydrofolate ligase.